The sequence spans 258 residues: RBPJ-interacting and tubulin-associated protein 1 (258 aa).

3 disordered regions span residues 28–86 (FGSP…PRKK), 132–182 (TPPA…APRS), and 195–258 (AVPS…PPWK). Over residues 71 to 81 (SPSSRGSTPNL) the composition is skewed to polar residues. Positions 81 to 97 (LTPRKKNKYRLIGHTPS) match the Nuclear localization signal motif. The segment at 117–145 (RTAVEDAAKLRTLFWTPPATPRGSHSPRP) is interaction with RBPJ/RBPSUH. The tract at residues 145–258 (PRETPLRAIH…CPQKPKPPWK (114 aa)) is interaction with tubulin. Polar residues-rich tracts occupy residues 201 to 212 (HPASTAPQTNGP) and 236 to 245 (GSVSGPTTPQ).

Belongs to the RITA family. As to quaternary structure, interacts with RBPJ/RBPSUH.

It is found in the cytoplasm. The protein resides in the nucleus. It localises to the cytoskeleton. The protein localises to the microtubule organizing center. Its subcellular location is the centrosome. Tubulin-binding protein that acts as a negative regulator of Notch signaling pathway. Shuttles between the cytoplasm and the nucleus and mediates the nuclear export of RBPJ/RBPSUH, thereby preventing the interaction between RBPJ/RBPSUH and NICD product of Notch proteins (Notch intracellular domain), leading to down-regulate Notch-mediated transcription. May play a role in neurogenesis. This Rattus norvegicus (Rat) protein is RBPJ-interacting and tubulin-associated protein 1 (Rita1).